Reading from the N-terminus, the 553-residue chain is Ergothioneine transport permease/ergothioneine binding protein EgtU (553 aa).

Residues 57-236 (LAQHFIIVAL…LFSVLADKFV (180 aa)) form the ABC transmembrane type-1 domain. 6 helical membrane-spanning segments follow: residues 61–81 (FIIVALSGFLVLVFGVLIGVF), 98–118 (FLYTIPSLALFALFIPVIGVG), 122–142 (ALLVLVLYGLLPIVYSTYNAL), 182–202 (IAVVMLVAMAGIGALIGAGGL), 219–239 (VAGSLIIALFSVLADKFVSVF), and 261–281 (VYTNLAVFLFLLLASALWLIP). At 282 to 553 (RNAIEEKPLV…AKDFLERLGL (272 aa)) the chain is on the periplasmic side. The tract at residues 288–549 (KPLVVATKPS…PKIVAKDFLE (262 aa)) is ergothioneine binding domain.

This sequence in the N-terminal section; belongs to the binding-protein-dependent transport system permease family. It in the C-terminal section; belongs to the OsmX family. As to quaternary structure, the complex is composed of two ATP-binding proteins (EgtV) and two transmembrane proteins (EgtU).

The protein resides in the cell inner membrane. Part of the ABC transporter complex EgtUV involved in the uptake of ergothioneine (EGT), a natural low-molecular weight (LMW) thiol antioxidant which protects H.pylori against bleach stress. Responsible for the translocation of the substrate across the membrane. Also contains a C-terminal periplasmic solute-binding domain (SBD) which binds to ergothioneine with low-micromolar affinity. Cannot bind the structurally similar compounds glycine betaine, choline, proline, carnitine or histidine. The sequence is that of Ergothioneine transport permease/ergothioneine binding protein EgtU from Helicobacter pylori (strain G27).